The following is a 339-amino-acid chain: Heat-inducible transcription repressor HrcA (339 aa).

This sequence belongs to the HrcA family.

Functionally, negative regulator of class I heat shock genes (grpE-dnaK-dnaJ and groELS operons). Prevents heat-shock induction of these operons. The polypeptide is Heat-inducible transcription repressor HrcA (Clostridium perfringens (strain 13 / Type A)).